A 523-amino-acid polypeptide reads, in one-letter code: Putative pentatricopeptide repeat-containing protein At3g15200 (523 aa).

10 PPR repeats span residues 142–172 (SSML…MSKR), 177–211 (NEKT…GIDD), 212–242 (DLVA…RRRE), 246–280 (DIKA…KCRP), 281–315 (DVVS…RRNP), 316–350 (DVKI…GPDP), 351–385 (NVVT…GGSC), 388–418 (NDVT…NKCE), 420–454 (TSDL…GLGP), and 455–489 (DQRT…GMVP). Positions 497–523 (LNQNKTKPRVEDKMLRSNLTSEESESD) are disordered.

Belongs to the PPR family. P subfamily.

The chain is Putative pentatricopeptide repeat-containing protein At3g15200 from Arabidopsis thaliana (Mouse-ear cress).